We begin with the raw amino-acid sequence, 595 residues long: L-allo-isoleucine:holo-[CmaA peptidyl-carrier protein] ligase (595 aa).

The Carrier domain maps to 507–582 (VVSPQAGSAV…EWVQYYATHA (76 aa)). Serine 542 carries the post-translational modification O-(pantetheine 4'-phosphoryl)serine.

This sequence belongs to the ATP-dependent AMP-binding enzyme family. Homodimer. Pantetheine 4'-phosphate is required as a cofactor.

The catalysed reaction is L-alloisoleucine + holo-[CmaA peptidyl-carrier protein] + ATP = L-alloisoleucyl-[CmaA peptidyl-carrier protein] + AMP + diphosphate. In terms of biological role, involved in the biosynthesis of the phytotoxin coronatine (COR) which mimics the plant hormone jasmonic acid isoleucine and promotes opening of stomata for bacterial entry, bacterial growth in the apoplast, systemic susceptibility, and disease symptoms. CmaA catalyzes the adenylation of L-allo-isoleucine (via the A domain) and the attachment of L-allo-isoleucine to the 4'-phosphopantetheine arm located within the T domain of CmaA. It can also use L-isoleucine, L-leucine and L-valine as substrates. This Pseudomonas savastanoi pv. glycinea (Pseudomonas syringae pv. glycinea) protein is L-allo-isoleucine:holo-[CmaA peptidyl-carrier protein] ligase.